The primary structure comprises 183 residues: Alkyl hydroperoxide reductase AhpD (183 aa).

C132 functions as the Proton donor in the catalytic mechanism. C132 and C135 are joined by a disulfide. Residue C135 is the Cysteine sulfenic acid (-SOH) intermediate of the active site.

Belongs to the AhpD family.

It carries out the reaction N(6)-[(R)-dihydrolipoyl]-L-lysyl-[lipoyl-carrier protein] + a hydroperoxide = N(6)-[(R)-lipoyl]-L-lysyl-[lipoyl-carrier protein] + an alcohol + H2O. Antioxidant protein with alkyl hydroperoxidase activity. Required for the reduction of the AhpC active site cysteine residues and for the regeneration of the AhpC enzyme activity. This Acidobacterium capsulatum (strain ATCC 51196 / DSM 11244 / BCRC 80197 / JCM 7670 / NBRC 15755 / NCIMB 13165 / 161) protein is Alkyl hydroperoxide reductase AhpD.